The chain runs to 635 residues: MATQISTRGSQCTIGQEEYSLYSSLSEDELVQMAIEQSLADKTRGPTTAEATASACTNRQPAHFYPWTRSTAPPESSPARAPMGLFQGVMQKYSSSLFKTSQLAPADPLIKAIKDGDEEALKTMIKEGKNLAEPNKEGWLPLHEAAYYGQVGCLKVLQRAYPGTIDQRTLQEETAVYLATCRGHLDCLLSLLQAGAEPDISNKSRETPLYKACERKNAEAVKILVQHNADTNHRCNRGWTALHESVSRNDLEVMQILVSGGAKVESKNAYGITPLFVAAQSGQLEALRFLAKYGADINTQASDNASALYEACKNEHEEVVEFLLSQGADANKTNKDGLLPLHIASKKGNYRIVQMLLPVTSRTRIRRSGVSPLHLAAERNHDEVLEALLSARFDVNTPLAPERARLYEDRRSSALYFAVVNNNVYATELLLQHGADPNRDVISPLLVAIRHGCLRTMQLLLDHGANIDAYIATHPTAFPATIMFAMKCLSLLKFLMDLGCDGEPCFSCLYGNGPHPPAPQPSSRFNDAPAADKEPSVVQFCEFVSAPEVSRWAGPIIDVLLDYVGNVQLCSRLKEHIDSFEDWAVIKEKAEPPRPLAHLCRLRVRKAIGKYRIKLLDTLPLPGRLIRYLKYENTQ.

The tract at residues arginine 8–glutamine 16 is required for FLNA degradation. A UIM domain is found at serine 26–glycine 45. ANK repeat units lie at residues alanine 104–glutamate 133, glutamate 137–glutamine 167, glutamine 171–isoleucine 200, serine 204–histidine 233, arginine 237–serine 266, tyrosine 270–threonine 299, aspartate 303–lysine 332, aspartate 336–isoleucine 365, serine 368–threonine 397, arginine 410–arginine 439, aspartate 440–alanine 469, and threonine 476–proline 504. Serine 371 is modified (phosphoserine; by MAPK). The SOCS box domain occupies isoleucine 586–glutamine 635.

It belongs to the ankyrin SOCS box (ASB) family. In terms of assembly, component of a probable ECS E3 ubiquitin-protein ligase complex which contains CUL5, either RBX1 or RNF7/RBX2, Elongin BC complex (ELOB and ELOC) and ASB2. Interacts with SKP2. Through its interaction with SKP2, likely to bridge the formation of dimeric E3-ubiquitin-protein ligase complexes composed of an ECS complex and an SCF(SKP2) complex. Interacts with JAK2; the interaction targets JAK2 for Notch-mediated proteasomal degradation. Interacts with TCF3/E2A; the interaction is mediated by SKP2 and targets TCF3 for Notch-mediated proteasomal degradation. Interacts with DES. Monoubiquitinated. Post-translationally, not monoubiquitinated. In terms of processing, phosphorylation at Ser-371 is required for association with FLNA and subsequent FLNA degradation. As to expression, expressed in muscle cells. Expressed in hematopoietic cells.

It localises to the cytoplasm. It is found in the cytoskeleton. The protein localises to the stress fiber. Its subcellular location is the myofibril. The protein resides in the sarcomere. It localises to the z line. Its pathway is protein modification; protein ubiquitination. In terms of biological role, substrate-recognition component of a SCF-like ECS (Elongin-Cullin-SOCS-box protein) E3 ubiquitin-protein ligase complex which mediates the ubiquitination and subsequent proteasomal degradation of target proteins. Mediates Notch-induced ubiquitination and degradation of substrates including TCF3/E2A and JAK2. Required during embryonic heart development for complete heart looping. Required for cardiomyocyte differentiation. Specifically promotes the ubiquitination of SMAD9 and targets it for proteasomal degradation, leading to avoid excessive accumulation of SMAD9. Plays a role in the regulation of NK-cell migration by modulating protein levels of filamin A/FLNA via regulation of its ubiquitination and proteasome degradation. Functionally, involved in myogenic differentiation and targets filamin FLNB for proteasomal degradation but not filamin FLNA. Also targets DES for proteasomal degradation. Acts as a negative regulator of skeletal muscle mass. Its function is as follows. Targets filamins FLNA and FLNB for proteasomal degradation. This leads to enhanced adhesion of hematopoietic cells to fibronectin. Required for FLNA degradation in immature cardiomyocytes which is necessary for actin cytoskeleton remodeling, leading to proper organization of myofibrils and function of mature cardiomyocytes. Required for degradation of FLNA and FLNB in immature dendritic cells (DC) which enhances immature DC migration by promoting DC podosome formation and DC-mediated degradation of the extracellular matrix. Does not promote proteasomal degradation of tyrosine-protein kinases JAK1 or JAK2 in hematopoietic cells. In Homo sapiens (Human), this protein is Ankyrin repeat and SOCS box protein 2 (ASB2).